We begin with the raw amino-acid sequence, 313 residues long: Putative HTH-type transcriptional regulatory protein Msm_0453 (313 aa).

The HTH cro/C1-type domain maps to 131-189; the sequence is IKQYREEYSLSLKDLADLAHVSRATMYKYENEIVRANTETAMILEEILNTKVTLDIDLL. A DNA-binding region (H-T-H motif) is located at residues 142-161; sequence LKDLADLAHVSRATMYKYEN.

The sequence is that of Putative HTH-type transcriptional regulatory protein Msm_0453 from Methanobrevibacter smithii (strain ATCC 35061 / DSM 861 / OCM 144 / PS).